The chain runs to 132 residues: Small ribosomal subunit protein uS8 (132 aa).

It belongs to the universal ribosomal protein uS8 family. As to quaternary structure, part of the 30S ribosomal subunit. Contacts proteins S5 and S12.

Its function is as follows. One of the primary rRNA binding proteins, it binds directly to 16S rRNA central domain where it helps coordinate assembly of the platform of the 30S subunit. This chain is Small ribosomal subunit protein uS8, found in Francisella tularensis subsp. tularensis (strain FSC 198).